Here is a 254-residue protein sequence, read N- to C-terminus: Isoprenyl transferase (254 aa).

Asp-12 is an active-site residue. Asp-12 is a Mg(2+) binding site. Substrate-binding positions include 13-16 (GNGR), Trp-17, Arg-25, His-29, and 57-59 (SSE). The Proton acceptor role is filled by Asn-60. Substrate-binding positions include Trp-61, Arg-63, Arg-180, and 186–188 (RLS). Glu-199 is a binding site for Mg(2+).

This sequence belongs to the UPP synthase family. In terms of assembly, homodimer. Mg(2+) is required as a cofactor.

Functionally, catalyzes the condensation of isopentenyl diphosphate (IPP) with allylic pyrophosphates generating different type of terpenoids. The protein is Isoprenyl transferase of Brucella suis biovar 1 (strain 1330).